Consider the following 255-residue polypeptide: Uracil-DNA glycosylase (255 aa).

Residue Asp-93 is the Proton acceptor of the active site.

The protein belongs to the uracil-DNA glycosylase (UDG) superfamily. UNG family.

Its subcellular location is the host nucleus. The enzyme catalyses Hydrolyzes single-stranded DNA or mismatched double-stranded DNA and polynucleotides, releasing free uracil.. In terms of biological role, excises uracil residues from the DNA which can arise as a result of misincorporation of dUMP residues by DNA polymerase or deamination of cytosines. Therefore may reduce deleterious uracil incorporation into the viral genome, particularly in terminally differentiated cells which lack DNA repair enzymes. This Human herpesvirus 6A (strain Uganda-1102) (HHV-6 variant A) protein is Uracil-DNA glycosylase (U81).